Reading from the N-terminus, the 334-residue chain is Protein CUP-SHAPED COTYLEDON 3 (334 aa).

An NAC domain is found at leucine 22–lysine 171. The DNA-binding element occupies valine 121 to asparagine 177.

In a general manner, present at the boundaries between mersitems and araising primordia.

Its subcellular location is the nucleus. In terms of biological role, transcription activator. Involved in molecular mechanisms regulating shoot apical meristem (SAM) formation during embryogenesis and organ separation. Required for axillary meristem initiation and separation of the meristem from the main stem. May act as an inhibitor of cell division. The sequence is that of Protein CUP-SHAPED COTYLEDON 3 (NAC031) from Arabidopsis thaliana (Mouse-ear cress).